The sequence spans 391 residues: MVAEKTIKSMVSKAELPDNIKEELYAKLIEYNEKYKLKKDEIQAIIDETVREYQKALIEPGEAVGTVAAQSIGEPSTQMTLNTFHYAGVAEINVTLGLPRIIEIVDARKNPSTPIMTVYLDEEHRYDRDKALEVARRIEGTTLENLAREETIDILNMEYVVEIDPERLEKAGLDMEKVVRKLTGSFKSAEFEAEGYTLVVRPKKVTKLSDLRKIAEKVKKHRLKGLSGVGKTIIRKEGDEYVIYTEGSNFKQVLKVPGVDPTRTRTNNIWEIAEVLGIEAARNAIIDEIVSTMREQGLEVDVRHIMLVADMMTLDGVIRPIGRHGIVGEKASVLARAAFEITTQHLFAAAERGEVDPLNGVVENVLIGQPVPVGTGIVKLAMSLPLRPKRE.

The protein belongs to the RNA polymerase beta' chain family. In terms of assembly, part of the RNA polymerase complex.

It localises to the cytoplasm. The protein resides in the chromosome. The enzyme catalyses RNA(n) + a ribonucleoside 5'-triphosphate = RNA(n+1) + diphosphate. In terms of biological role, DNA-dependent RNA polymerase (RNAP) catalyzes the transcription of DNA into RNA using the four ribonucleoside triphosphates as substrates. Forms part of the jaw domain. This chain is DNA-directed RNA polymerase subunit Rpo1C, found in Thermococcus kodakarensis (strain ATCC BAA-918 / JCM 12380 / KOD1) (Pyrococcus kodakaraensis (strain KOD1)).